A 515-amino-acid chain; its full sequence is MATIPSHNLRPHTTNQRTQYSLSFRPHFSRSTLITFPARSSPARAMSRTDEEASISTRLEQESYGLTTAEDIRRRDGEAKESKRLRDTWRKIQGEDDWAGLMDPMDPVLRSELIRYGEMAQACYDAFDFDPFSRYCGSCRFTRRHLFDSLGIIDSGYEVARYLYATSNINLPNFFSKSRWSKVWSKNANWMGYVAVSDDNEATRCRLGRRDIAIAWRGTVTRLEWIADLKDFLKPVSGNGFRCPDPAVKAESGFLDLYTDKDTSCNFSKFSAREQVLTEVKRLVERYGDEEGEELSITVTGHSLGGALAVLSAYDVAEMGVNRTRKGKVIPVTAFTYGGPRVGNIRFKERIEKLGVKVLRVVNEHDVVAKSPGLFLNERAPQALMKLAGGLPWCYSHVGEMLPLDHQKSPFLKPTVDLSTAHNLEALLHLLDGYHGKGQRFVLSSGRDPALVNKASDFLKDHFMVPPYWRQDANKGMVRNTDGRWIQPDRIRADDQHAPDIHQLLTQLHHPSQLL.

The N-terminal 44 residues, 1 to 44, are a transit peptide targeting the chloroplast; sequence MATIPSHNLRPHTTNQRTQYSLSFRPHFSRSTLITFPARSSPAR. A GXSXG motif is present at residues 301–305; that stretch reads GHSLG. Ser-303 serves as the catalytic Acyl-ester intermediate. Catalysis depends on charge relay system residues Asp-366 and His-422.

The protein belongs to the AB hydrolase superfamily. Lipase family. Ubiquitous. Highly expressed in leaves.

The protein localises to the plastid. The protein resides in the chloroplast. It catalyses the reaction 1,2-dihexadecanoyl-sn-glycero-3-phosphocholine + H2O = 2-hexadecanoyl-sn-glycero-3-phosphocholine + hexadecanoate + H(+). The catalysed reaction is a 1,2-diacyl-3-O-(beta-D-galactosyl)-sn-glycerol + H2O = an acyl-3-O-(beta-D-galactosyl)-sn-glycerol + a fatty acid + H(+). The enzyme catalyses a 1,2-diacyl-3-O-[alpha-D-galactosyl-(1-&gt;6)-beta-D-galactosyl]-sn-glycerol + H2O = acyl-3-O-[alpha-D-galactosyl-(1-&gt;6)-beta-D-galactosyl]-sn-glycerol + a fatty acid + H(+). In terms of biological role, acylhydrolase with a broad specificity. Catalyzes the hydrolysis of phosphatidylcholine at the sn-1 position. Moderate activity toward phosphatidylcholine (PC), monogalactosyldiacylglycerol (MGDG), digalactosyldiacylglycerol (DGDG) and triacylglycerol (TAG). May display dual sn-1/sn-2 substrate specificity. Could be involved in early wound response. In Arabidopsis thaliana (Mouse-ear cress), this protein is Phospholipase A1-Igamma1, chloroplastic.